The chain runs to 271 residues: Mannosyl-3-phosphoglycerate phosphatase (271 aa).

Catalysis depends on Asp-13, which acts as the Nucleophile. Mg(2+) is bound by residues Asp-13, Asp-15, and Asp-214.

It belongs to the HAD-like hydrolase superfamily. MPGP family. Mg(2+) serves as cofactor.

It is found in the cytoplasm. It catalyses the reaction 2-O-(alpha-D-mannosyl)-3-phosphoglycerate + H2O = (2R)-2-O-(alpha-D-mannosyl)-glycerate + phosphate. The chain is Mannosyl-3-phosphoglycerate phosphatase (yedP) from Shigella sonnei (strain Ss046).